The following is a 234-amino-acid chain: Large ribosomal subunit protein uL1 (234 aa).

Belongs to the universal ribosomal protein uL1 family. In terms of assembly, part of the 50S ribosomal subunit.

Binds directly to 23S rRNA. The L1 stalk is quite mobile in the ribosome, and is involved in E site tRNA release. Its function is as follows. Protein L1 is also a translational repressor protein, it controls the translation of the L11 operon by binding to its mRNA. The chain is Large ribosomal subunit protein uL1 from Bdellovibrio bacteriovorus (strain ATCC 15356 / DSM 50701 / NCIMB 9529 / HD100).